Here is a 360-residue protein sequence, read N- to C-terminus: Photosystem II protein D1 (360 aa).

Transmembrane regions (helical) follow at residues 29–46 (YIGW…SAIS), 118–133 (HFFI…EWEL), and 142–156 (WICV…AAAA). A chlorophyll a-binding site is contributed by histidine 118. Residue tyrosine 126 coordinates pheophytin a. Residues aspartate 170 and glutamate 189 each coordinate [CaMn4O5] cluster. The chain crosses the membrane as a helical span at residues 197–218 (FHMLGVAGVFGGSLFSAMHGSL). Histidine 198 is a chlorophyll a binding site. Residues histidine 215 and 264-265 (SF) contribute to the a quinone site. Fe cation is bound at residue histidine 215. Histidine 272 lines the Fe cation pocket. A helical membrane pass occupies residues 274 to 288 (FLGAWPVVGIWFTAM). Positions 332, 333, 342, and 344 each coordinate [CaMn4O5] cluster. Residues 345–360 (AGESLPVALVAPAVAA) constitute a propeptide that is removed on maturation.

It belongs to the reaction center PufL/M/PsbA/D family. PSII is composed of 1 copy each of membrane proteins PsbA, PsbB, PsbC, PsbD, PsbE, PsbF, PsbH, PsbI, PsbJ, PsbK, PsbL, PsbM, PsbT, PsbX, PsbY, PsbZ, Psb30/Ycf12, at least 3 peripheral proteins of the oxygen-evolving complex and a large number of cofactors. It forms dimeric complexes. The D1/D2 heterodimer binds P680, chlorophylls that are the primary electron donor of PSII, and subsequent electron acceptors. It shares a non-heme iron and each subunit binds pheophytin, quinone, additional chlorophylls, carotenoids and lipids. D1 provides most of the ligands for the Mn4-Ca-O5 cluster of the oxygen-evolving complex (OEC). There is also a Cl(-1) ion associated with D1 and D2, which is required for oxygen evolution. The PSII complex binds additional chlorophylls, carotenoids and specific lipids. is required as a cofactor. Post-translationally, tyr-161 forms a radical intermediate that is referred to as redox-active TyrZ, YZ or Y-Z. C-terminally processed by CTPA; processing is essential to allow assembly of the oxygen-evolving complex and thus photosynthetic growth.

Its subcellular location is the plastid. The protein localises to the chloroplast thylakoid membrane. The enzyme catalyses 2 a plastoquinone + 4 hnu + 2 H2O = 2 a plastoquinol + O2. Photosystem II (PSII) is a light-driven water:plastoquinone oxidoreductase that uses light energy to abstract electrons from H(2)O, generating O(2) and a proton gradient subsequently used for ATP formation. It consists of a core antenna complex that captures photons, and an electron transfer chain that converts photonic excitation into a charge separation. The D1/D2 (PsbA/PsbD) reaction center heterodimer binds P680, the primary electron donor of PSII as well as several subsequent electron acceptors. The sequence is that of Photosystem II protein D1 from Emiliania huxleyi (Coccolithophore).